The sequence spans 746 residues: Protein C-mannosyl-transferase DPY19L1 (746 aa).

Positions 1–68 (MVLQARSKHR…RAETAAPAPD (68 aa)) are disordered. Residues 14-27 (PRPPRPARSSPPPL) are compositionally biased toward pro residues. 12 consecutive transmembrane segments (helical) span residues 93–113 (STLL…TQLF), 139–159 (YSYF…WMIM), 227–247 (ACFY…LFFI), 248–268 (YGTY…CFFF), 308–328 (YRGS…PWQF), 329–349 (AQFV…VGYI), 357–377 (IIYT…GNSM), 378–398 (LLTS…AMKP), 405–425 (VSEL…TVTL), 481–501 (LLLP…INDM), 520–540 (GELV…ILIM), and 562–582 (LFGW…VLAA).

It belongs to the dpy-19 family.

It is found in the endoplasmic reticulum membrane. The enzyme catalyses L-tryptophyl-[protein] + a di-trans,poly-cis-dolichyl beta-D-mannosyl phosphate = C-alpha-D-mannosyl-L-tryptophyl-[protein] + a di-trans,poly-cis-dolichyl phosphate + H(+). It functions in the pathway protein modification; protein glycosylation. In terms of biological role, C-mannosyltransferase that mediates the C-mannosylation tryptophan residues on target proteins. The reaction occurs on the luminal side of the endoplasmic reticulum and involves the transfer of a mannose unit from a dolichylphosphate mannose (Dol-P-Man) donor to an acceptor protein containing a WxxW consensus sequence. C-mannosylates the first two tryptophans in the WxxWxxWxxC sequence motif in thrombospondin (TSP) type-1 repeats of UNC5A. Regulates neurite extension during development. The sequence is that of Protein C-mannosyl-transferase DPY19L1 (Dpy19l1) from Rattus norvegicus (Rat).